The chain runs to 295 residues: Glutamate-binding protein GluB (295 aa).

An N-terminal signal peptide occupies residues 1-26 (MSAKRTFTRIGAILGATALAGVTLTA). C27 carries N-palmitoyl cysteine lipidation. C27 is lipidated: S-diacylglycerol cysteine.

Belongs to the bacterial solute-binding protein 3 family. In terms of assembly, the complex is composed of two ATP-binding proteins (GluA), two transmembrane proteins (GluC and GluD) and a solute-binding protein (GluB).

The protein localises to the cell membrane. Its activity is regulated as follows. Binding of glutamate or asparatate induces a higher thermal stability of the protein structure. Part of the ABC transporter complex GluABCD involved in glutamate uptake. Binds glutamate with a high affinity. Also binds aspartate with high affinity, suggesting that GluB could be involved in the transport of both amino acid residues into the cell. This is Glutamate-binding protein GluB from Corynebacterium glutamicum (strain ATCC 13032 / DSM 20300 / JCM 1318 / BCRC 11384 / CCUG 27702 / LMG 3730 / NBRC 12168 / NCIMB 10025 / NRRL B-2784 / 534).